Reading from the N-terminus, the 515-residue chain is RNA-splicing ligase RtcB homolog (515 aa).

Mn(2+)-binding residues include aspartate 129, cysteine 132, histidine 237, histidine 269, and histidine 363. 236–240 lines the GMP pocket; the sequence is NHYAE. Residues 363 to 364, 412 to 415, serine 419, 438 to 441, and lysine 514 each bind GMP; these read HN, GGTM, and HGAG. Histidine 438 (GMP-histidine intermediate) is an active-site residue.

This sequence belongs to the RtcB family. As to quaternary structure, catalytic component of the tRNA-splicing ligase complex. It depends on Mn(2+) as a cofactor.

The enzyme catalyses a 3'-end 3'-phospho-ribonucleotide-RNA + a 5'-end dephospho-ribonucleoside-RNA + GTP = a ribonucleotidyl-ribonucleotide-RNA + GMP + diphosphate. It carries out the reaction a 3'-end 2',3'-cyclophospho-ribonucleotide-RNA + a 5'-end dephospho-ribonucleoside-RNA + GTP + H2O = a ribonucleotidyl-ribonucleotide-RNA + GMP + diphosphate + H(+). Its function is as follows. Catalytic subunit of the tRNA-splicing ligase complex that acts by directly joining spliced tRNA halves to mature-sized tRNAs by incorporating the precursor-derived splice junction phosphate into the mature tRNA as a canonical 3',5'-phosphodiester. May act as an RNA ligase with broad substrate specificity, and may function toward other RNAs. The sequence is that of RNA-splicing ligase RtcB homolog from Ostreococcus tauri.